A 245-amino-acid chain; its full sequence is tRNA pseudouridine synthase A (245 aa).

Residue Asp52 is the Nucleophile of the active site. Substrate is bound at residue Tyr110.

This sequence belongs to the tRNA pseudouridine synthase TruA family. As to quaternary structure, homodimer.

It catalyses the reaction uridine(38/39/40) in tRNA = pseudouridine(38/39/40) in tRNA. In terms of biological role, formation of pseudouridine at positions 38, 39 and 40 in the anticodon stem and loop of transfer RNAs. This Borrelia turicatae (strain 91E135) protein is tRNA pseudouridine synthase A.